Reading from the N-terminus, the 455-residue chain is J protein JJJ2 (455 aa).

Positions 12–76 (TYYSILGVPT…QLRAEYDKKL (65 aa)) constitute a J domain. Residues 104-241 (RNSKPYEQQP…RKKSEKKATP (138 aa)) form a disordered region. Low complexity predominate over residues 133 to 144 (NSNPHNENSSNN). Positions 156-168 (TLSKDSEDKHGTD) are enriched in basic and acidic residues.

The protein resides in the cytoplasm. Its subcellular location is the nucleus. This Candida glabrata (strain ATCC 2001 / BCRC 20586 / JCM 3761 / NBRC 0622 / NRRL Y-65 / CBS 138) (Yeast) protein is J protein JJJ2 (JJJ2).